A 488-amino-acid polypeptide reads, in one-letter code: RuvB-like helicase 1 (488 aa).

Residues 1–11 show a composition bias toward polar residues; the sequence is MATANTSSGSM. A disordered region spans residues 1–29; that stretch reads MATANTSSGSMNGVGPVTMDSSTSGASRE. 87–94 contacts ATP; the sequence is GGPGTGKT.

The protein belongs to the RuvB family. May form heterododecamers with RVB2. Component of the SWR1 chromatin remodeling complex, the INO80 chromatin remodeling complex, and of the R2TP complex.

Its subcellular location is the nucleus. It carries out the reaction ATP + H2O = ADP + phosphate + H(+). DNA helicase which participates in several chromatin remodeling complexes, including the SWR1 and the INO80 complexes. The SWR1 complex mediates the ATP-dependent exchange of histone H2A for the H2A variant HZT1 leading to transcriptional regulation of selected genes by chromatin remodeling. The INO80 complex remodels chromatin by shifting nucleosomes and is involved in DNA repair. Also involved in pre-rRNA processing. The protein is RuvB-like helicase 1 (RVB1) of Mycosarcoma maydis (Corn smut fungus).